Reading from the N-terminus, the 264-residue chain is Mannose-specific lectin CEA (264 aa).

The N-terminal stretch at 1–23 (MAKLLLFLLPAILGLLVPRSAVA) is a signal peptide. 2 Bulb-type lectin domains span residues 26 to 131 (TNYL…PWVP) and 145 to 252 (NNLL…PQAK). Beta-D-mannose is bound by residues 51 to 55 (QDDCN), Tyr-59, Trp-63, Gln-64, 170 to 174 (QGDCN), Tyr-178, and 182 to 185 (YGWQ). The short motif at 51–59 (QDDCNLVLY) is the Carbohydrate-binding motif 1 element. Intrachain disulfides connect Cys-54/Cys-74 and Cys-173/Cys-195. The Carbohydrate-binding motif 2 motif lies at 170-178 (QGDCNLVLY).

In terms of assembly, forms heterotetramer of 2 chains 1 and 2 chains 2 arranged as a dimer of chain 1 and chain 2 heterodimers.

The protein resides in the secreted. In terms of biological role, mannose-specific lectin. Shows agglutinating activity towards erythrocytes from rabbit. Has insecticidal activity against cotton aphids and other hemipteran insects. The chain is Mannose-specific lectin CEA from Colocasia esculenta (Wild taro).